The chain runs to 592 residues: BTB/POZ domain-containing protein At5g03250 (592 aa).

The 71-residue stretch at 28–98 folds into the BTB domain; sequence SDVTIEVGDM…CYGVKIELTA (71 aa). Residues 217–502 enclose the NPH3 domain; it reads DWWFDDASFL…VQVLFFEQLR (286 aa). Tyrosine 443 is subject to Phosphotyrosine.

Belongs to the NPH3 family.

It functions in the pathway protein modification; protein ubiquitination. Functionally, may act as a substrate-specific adapter of an E3 ubiquitin-protein ligase complex (CUL3-RBX1-BTB) which mediates the ubiquitination and subsequent proteasomal degradation of target proteins. This is BTB/POZ domain-containing protein At5g03250 from Arabidopsis thaliana (Mouse-ear cress).